We begin with the raw amino-acid sequence, 372 residues long: GTPase Obg (372 aa).

One can recognise an Obg domain in the interval 1–159 (MKFVDEATIE…RRLRLELKVL (159 aa)). Residues 160–336 (ADVGLLGLPN…LIWALQDYLD (177 aa)) form the OBG-type G domain. GTP contacts are provided by residues 166-173 (GLPNAGKS), 191-195 (FTTLH), 213-216 (DIPG), 288-291 (NKLD), and 317-319 (SGL). Mg(2+)-binding residues include Ser-173 and Thr-193. Residues 341 to 372 (KEQITQDKADGSYVHEDPRFDTTRDAPPSGKD) form a disordered region.

It belongs to the TRAFAC class OBG-HflX-like GTPase superfamily. OBG GTPase family. Monomer. Requires Mg(2+) as cofactor.

It localises to the cytoplasm. In terms of biological role, an essential GTPase which binds GTP, GDP and possibly (p)ppGpp with moderate affinity, with high nucleotide exchange rates and a fairly low GTP hydrolysis rate. Plays a role in control of the cell cycle, stress response, ribosome biogenesis and in those bacteria that undergo differentiation, in morphogenesis control. The polypeptide is GTPase Obg (Bordetella avium (strain 197N)).